We begin with the raw amino-acid sequence, 261 residues long: Ubiquinone biosynthesis O-methyltransferase (261 aa).

The tract at residues 1 to 22 (MTMQVDPSANSSAASSAAPGTT) is disordered. Positions 8 to 18 (SANSSAASSAA) are enriched in low complexity. S-adenosyl-L-methionine-binding residues include R55, G86, D107, and M149.

It belongs to the methyltransferase superfamily. UbiG/COQ3 family.

The enzyme catalyses a 3-demethylubiquinol + S-adenosyl-L-methionine = a ubiquinol + S-adenosyl-L-homocysteine + H(+). The catalysed reaction is a 3-(all-trans-polyprenyl)benzene-1,2-diol + S-adenosyl-L-methionine = a 2-methoxy-6-(all-trans-polyprenyl)phenol + S-adenosyl-L-homocysteine + H(+). The protein operates within cofactor biosynthesis; ubiquinone biosynthesis. O-methyltransferase that catalyzes the 2 O-methylation steps in the ubiquinone biosynthetic pathway. This Nitrobacter winogradskyi (strain ATCC 25391 / DSM 10237 / CIP 104748 / NCIMB 11846 / Nb-255) protein is Ubiquinone biosynthesis O-methyltransferase.